A 268-amino-acid chain; its full sequence is Bis(5'-nucleosyl)-tetraphosphatase, symmetrical (268 aa).

The protein belongs to the Ap4A hydrolase family.

The catalysed reaction is P(1),P(4)-bis(5'-adenosyl) tetraphosphate + H2O = 2 ADP + 2 H(+). Its function is as follows. Hydrolyzes diadenosine 5',5'''-P1,P4-tetraphosphate to yield ADP. The sequence is that of Bis(5'-nucleosyl)-tetraphosphatase, symmetrical from Vibrio campbellii (strain ATCC BAA-1116).